The sequence spans 355 residues: Ion-translocating oxidoreductase complex subunit D (355 aa).

Helical transmembrane passes span Trp-23 to Thr-43, Leu-44 to Phe-64, Ala-78 to Ala-109, and Val-129 to Ile-149. An FMN phosphoryl threonine modification is found at Thr-194. 5 helical membrane-spanning segments follow: residues Phe-221–Leu-241, Ile-250–Pro-270, Thr-273–Ala-293, Ile-307–Pro-327, and Asp-328–Thr-348.

This sequence belongs to the NqrB/RnfD family. The complex is composed of six subunits: RnfA, RnfB, RnfC, RnfD, RnfE and RnfG. It depends on FMN as a cofactor.

It localises to the cell inner membrane. Part of a membrane-bound complex that couples electron transfer with translocation of ions across the membrane. In Vibrio vulnificus (strain CMCP6), this protein is Ion-translocating oxidoreductase complex subunit D.